Reading from the N-terminus, the 723-residue chain is Transmembrane channel-like protein 7 (723 aa).

2 disordered regions span residues 1-28 (MSESSGSALQPGRPSRQPAVHPENLSLD) and 51-71 (RRRTTVHSRDKQSGTLLKPTD). Residues 1–168 (MSESSGSALQ…GIQSYFSFLR (168 aa)) lie on the Extracellular side of the membrane. N-linked (GlcNAc...) asparagine glycosylation occurs at Asn24. Residue Asn84 is glycosylated (N-linked (GlcNAc...) asparagine). Ser89 carries the post-translational modification Phosphoserine. N-linked (GlcNAc...) asparagine glycosylation occurs at Asn96. Residues 169-189 (FLVLLNLVIFLIIFMLVLLPV) form a helical membrane-spanning segment. At 190 to 219 (LLTKYKITNSSFVLIPFKDMDKQCTVYPVS) the chain is on the cytoplasmic side. A helical membrane pass occupies residues 220–240 (SSGLIYFYSYIIDLLSGTGFL). Topologically, residues 241-263 (EETSLFYGHYTIDGVKFQNFTYD) are extracellular. A glycan (N-linked (GlcNAc...) asparagine) is linked at Asn259. Residues 264–284 (LPLAYLLSTIASLALSLLWIV) traverse the membrane as a helical segment. Topologically, residues 285–362 (KRSVEGFKIN…EETIRIYSLR (78 aa)) are cytoplasmic. The helical transmembrane segment at 363 to 383 (LFLNCIVLAVLGACFYAIYVA) threads the bilayer. Over 384–404 (TVFSQEHMKKEIDKMVFGENL) the chain is Extracellular. The helical transmembrane segment at 405-425 (FILYLPSIVITLANFITPMIF) threads the bilayer. The Cytoplasmic portion of the chain corresponds to 426-494 (AKIIRYEDYS…PCWETQVGQE (69 aa)). The helical transmembrane segment at 495-515 (MYKLMIFDFIIILAVTLFVDF) threads the bilayer. Over 516–555 (PRKLLVTYCSSCKLIQCWGQQEFAIPDNVLGIVYGQTICW) the chain is Extracellular. Residues 556-576 (IGAFFSPLLPAIATLKFIIIF) traverse the membrane as a helical segment. Residues 577-601 (YVKEWSLLYTCRPSPRPFRASNSNF) lie on the Cytoplasmic side of the membrane. Residues 602-622 (FFLLVLLIGLCLAIIPLTISI) traverse the membrane as a helical segment. Residues 623-665 (SRIPSSKACGPFTNFNTTWEVIPKTVSTFPSSLQSFIHGVTSE) lie on the Extracellular side of the membrane. An N-linked (GlcNAc...) asparagine glycan is attached at Asn638. The chain crosses the membrane as a helical span at residues 666–686 (AFAVPFFMIICLIMFYFIALA). Topologically, residues 687 to 723 (GAHKRVVIQLREQLSLESRDKCYLIQKLTEAQRDMRN) are cytoplasmic.

The protein belongs to the TMC family. As to quaternary structure, interacts with PIEZO2; the interaction inhibits PIEZO2-conducted mechanically activated currents.

The protein resides in the membrane. Acts as an inhibitory modulator of PIEZO2 mechanosensitive channel in dorsal root ganglion (DRG) neurons through physical interactions or interference with the interaction between PIEZO2 and the cytoskeleton. The polypeptide is Transmembrane channel-like protein 7 (Homo sapiens (Human)).